Reading from the N-terminus, the 191-residue chain is Thymidine kinase (191 aa).

ATP is bound by residues 15 to 22 (GSMFSGKS) and 88 to 91 (DEVQ). Residue glutamate 89 is the Proton acceptor of the active site. 4 residues coordinate Zn(2+): cysteine 145, cysteine 148, cysteine 183, and histidine 186.

This sequence belongs to the thymidine kinase family. Homotetramer.

It is found in the cytoplasm. The catalysed reaction is thymidine + ATP = dTMP + ADP + H(+). The protein is Thymidine kinase of Macrococcus caseolyticus (strain JCSC5402) (Macrococcoides caseolyticum).